We begin with the raw amino-acid sequence, 156 residues long: Transcription elongation factor GreA (156 aa).

Residues 1-32 are a coiled coil; it reads MKKVRLTREGYEKLKQELEELKRKFMYEISER.

The protein belongs to the GreA/GreB family.

Its function is as follows. Necessary for efficient RNA polymerase transcription elongation past template-encoded arresting sites. The arresting sites in DNA have the property of trapping a certain fraction of elongating RNA polymerases that pass through, resulting in locked ternary complexes. Cleavage of the nascent transcript by cleavage factors such as GreA or GreB allows the resumption of elongation from the new 3'terminus. GreA releases sequences of 2 to 3 nucleotides. This Thermotoga neapolitana (strain ATCC 49049 / DSM 4359 / NBRC 107923 / NS-E) protein is Transcription elongation factor GreA.